Consider the following 891-residue polypeptide: Shieldin complex subunit 2 (891 aa).

Positions 1–61 are sufficient for interaction with SHLD3 and MAD2L2; that stretch reads MSQGSQVHIF…AGDQEFKNLE (61 aa). An interaction with ASTE1 region spans residues 1–542; sequence MSQGSQVHIF…TYVSTKHSYL (542 aa). Disordered regions lie at residues 184 to 222, 260 to 294, and 333 to 357; these read MSTGTKPEPTGHRERQSQESFSDTRCEPQSEGAVRKASD, NMEAEPTGSQGVRRTEGDFSKPGGDFEEESENEQS, and NEENLPPNELCSSHPSTANRSWSCK. The segment covering 192 to 222 has biased composition (basic and acidic residues); that stretch reads PTGHRERQSQESFSDTRCEPQSEGAVRKASD. Composition is skewed to polar residues over residues 260 to 271 and 342 to 354; these read NMEAEPTGSQGV and LCSSHPSTANRSW. The mediates interaction with SHLD1 stretch occupies residues 695-866; sequence KYSGVVLIKA…QQDFSLLDFC (172 aa).

It belongs to the SHLD2 family. In terms of assembly, component of the shieldin complex, consisting of SHLD1, SHLD2, SHLD3 and MAD2L2/REV7. Within the complex, SHLD2 forms a scaffold which interacts with a SHLD3-MAD2L2 subcomplex via its N-terminus, and with SHLD1 via its C-terminus. Interacts with TP53BP1. Interacts with RIF1. Interacts with ASTE1.

The protein localises to the chromosome. Functionally, component of the shieldin complex, which plays an important role in repair of DNA double-stranded breaks (DSBs). During G1 and S phase of the cell cycle, the complex functions downstream of TP53BP1 to promote non-homologous end joining (NHEJ) and suppress DNA end resection. Mediates various NHEJ-dependent processes including immunoglobulin class-switch recombination, and fusion of unprotected telomeres. In Mus musculus (Mouse), this protein is Shieldin complex subunit 2.